Consider the following 419-residue polypeptide: Tyrosine--tRNA ligase (419 aa).

Tyrosine 34 contacts L-tyrosine. A 'HIGH' region motif is present at residues 39-48 (PTADSLHIGN). Tyrosine 169 and glutamine 173 together coordinate L-tyrosine. The 'KMSKS' region signature appears at 230-234 (KFGKT). Lysine 233 contributes to the ATP binding site. Positions 352-419 (VPLVELLVSA…KKKYYLIRYA (68 aa)) constitute an S4 RNA-binding domain.

Belongs to the class-I aminoacyl-tRNA synthetase family. TyrS type 1 subfamily. In terms of assembly, homodimer.

It localises to the cytoplasm. It carries out the reaction tRNA(Tyr) + L-tyrosine + ATP = L-tyrosyl-tRNA(Tyr) + AMP + diphosphate + H(+). Its function is as follows. Catalyzes the attachment of tyrosine to tRNA(Tyr) in a two-step reaction: tyrosine is first activated by ATP to form Tyr-AMP and then transferred to the acceptor end of tRNA(Tyr). This is Tyrosine--tRNA ligase from Bacillus caldotenax.